We begin with the raw amino-acid sequence, 322 residues long: Ferric-anguibactin-binding protein FatB (322 aa).

A signal peptide spans 1 to 22 (MFKSTLNIAVAIVCSSLVTLTG). Cys-23 carries N-palmitoyl cysteine lipidation. The S-diacylglycerol cysteine moiety is linked to residue Cys-23. In terms of domain architecture, Fe/B12 periplasmic-binding spans 57–322 (RVAALDMNEV…IDDIIKGYQS (266 aa)).

It belongs to the bacterial solute-binding protein 8 family. Part of an iron transport system composed of the outer membrane receptor FatA, the periplasmic binding protein FatB and the inner membrane proteins FatC and FatD.

It localises to the cell inner membrane. Involved in the uptake of iron in complex with the siderophore anguibactin. Binds ferric-anguibactin in the periplasm and mediates its transport into the cytoplasm. The sequence is that of Ferric-anguibactin-binding protein FatB from Vibrio anguillarum (strain ATCC 68554 / 775) (Listonella anguillarum).